The primary structure comprises 147 residues: Cyanate hydratase (147 aa).

Catalysis depends on residues Arg-88, Glu-91, and Ser-114.

It belongs to the cyanase family.

The enzyme catalyses cyanate + hydrogencarbonate + 3 H(+) = NH4(+) + 2 CO2. In terms of biological role, catalyzes the reaction of cyanate with bicarbonate to produce ammonia and carbon dioxide. The chain is Cyanate hydratase from Albidiferax ferrireducens (strain ATCC BAA-621 / DSM 15236 / T118) (Rhodoferax ferrireducens).